A 1755-amino-acid chain; its full sequence is Transposon Ty1-BL Gag-Pol polyprotein (1755 aa).

3 stretches are compositionally biased toward polar residues: residues 20–31, 46–55, and 137–168; these read SVTSKEVQTTQD, VSTQANSQQP, and VGTHLNTPSPESGNSFPDSSSAKSNMTSTNQH. 3 disordered regions span residues 20–84, 137–173, and 350–420; these read SVTS…QNGP, VGTHLNTPSPESGNSFPDSSSAKSNMTSTNQHVRPPP, and QQES…IRGS. The RNA-binding stretch occupies residues 299–401; the sequence is NNGIPINNKV…NSQSRTARAH (103 aa). The segment covering 363-372 has biased composition (basic and acidic residues); it reads SPSDEKKDSR. Residues 373–411 are compositionally biased toward polar residues; sequence TYTNTTKPKSITRNSQKPNNSQSRTARAHNVSTFNNSPG. Catalysis depends on Asp-461, which acts as the For protease activity; shared with dimeric partner. Residues 583-640 form an integrase-type zinc finger-like region; that stretch reads NVHTSESTRKYPYPFIHRMLAHANAQTIRYSLKNNTITYFNESDVDWSSAIDYQCPDC. Residues 660 to 835 enclose the Integrase catalytic domain; it reads NSYEPFQYLH…AGLDISTLLP (176 aa). Residues Asp-671 and Asp-736 each contribute to the Mg(2+) site. The tract at residues 956 to 1172 is disordered; it reads SKAVSPTDST…LGGIGDSNAY (217 aa). Residues 960–969 are compositionally biased toward low complexity; the sequence is SPTDSTPPST. Composition is skewed to polar residues over residues 1005 to 1017 and 1031 to 1043; these read STPQISDIESTDS and MSQSNTHESSYAS. Over residues 1044–1053 the composition is skewed to basic and acidic residues; the sequence is KSKDFRHSDS. Composition is skewed to polar residues over residues 1054–1082 and 1095–1106; these read YSDNETNHTNVPISSTGGTNNKTVPQTSE and SIDTSSSESNSL. A Bipartite nuclear localization signal motif is present at residues 1178–1212; it reads KKRSLEDNETEIKVSRDTWNTKNMRSLEPPRSKKR. Residues 1338 to 1476 enclose the Reverse transcriptase Ty1/copia-type domain; sequence NNYHITQLDI…DILGLEIKYQ (139 aa). Positions 1346, 1427, 1428, 1610, 1652, and 1685 each coordinate Mg(2+). Residues 1610–1752 enclose the RNase H Ty1/copia-type domain; it reads DASYGNQPYY…IKTFKLLTNK (143 aa).

In terms of assembly, the capsid protein forms a homotrimer, from which the VLPs are assembled. The protease is a homodimer, whose active site consists of two apposed aspartic acid residues. Initially, virus-like particles (VLPs) are composed of the structural unprocessed proteins Gag and Gag-Pol, and also contain the host initiator methionine tRNA (tRNA(i)-Met) which serves as a primer for minus-strand DNA synthesis, and a dimer of genomic Ty RNA. Processing of the polyproteins occurs within the particle and proceeds by an ordered pathway, called maturation. First, the protease (PR) is released by autocatalytic cleavage of the Gag-Pol polyprotein yielding capsid protein p45 and a Pol-p154 precursor protein. This cleavage is a prerequisite for subsequent processing of Pol-p154 at the remaining sites to release the mature structural and catalytic proteins. Maturation takes place prior to the RT reaction and is required to produce transposition-competent VLPs.

Its subcellular location is the cytoplasm. The protein resides in the nucleus. The catalysed reaction is DNA(n) + a 2'-deoxyribonucleoside 5'-triphosphate = DNA(n+1) + diphosphate. The enzyme catalyses Endonucleolytic cleavage to 5'-phosphomonoester.. Functionally, capsid protein (CA) is the structural component of the virus-like particle (VLP), forming the shell that encapsulates the retrotransposons dimeric RNA genome. The particles are assembled from trimer-clustered units and there are holes in the capsid shells that allow for the diffusion of macromolecules. CA also has nucleocapsid-like chaperone activity, promoting primer tRNA(i)-Met annealing to the multipartite primer-binding site (PBS), dimerization of Ty1 RNA and initiation of reverse transcription. Its function is as follows. The aspartyl protease (PR) mediates the proteolytic cleavages of the Gag and Gag-Pol polyproteins after assembly of the VLP. Reverse transcriptase/ribonuclease H (RT) is a multifunctional enzyme that catalyzes the conversion of the retro-elements RNA genome into dsDNA within the VLP. The enzyme displays a DNA polymerase activity that can copy either DNA or RNA templates, and a ribonuclease H (RNase H) activity that cleaves the RNA strand of RNA-DNA heteroduplexes during plus-strand synthesis and hydrolyzes RNA primers. The conversion leads to a linear dsDNA copy of the retrotransposon that includes long terminal repeats (LTRs) at both ends. In terms of biological role, integrase (IN) targets the VLP to the nucleus, where a subparticle preintegration complex (PIC) containing at least integrase and the newly synthesized dsDNA copy of the retrotransposon must transit the nuclear membrane. Once in the nucleus, integrase performs the integration of the dsDNA into the host genome. The sequence is that of Transposon Ty1-BL Gag-Pol polyprotein (TY1B-BL) from Saccharomyces cerevisiae (strain ATCC 204508 / S288c) (Baker's yeast).